The chain runs to 376 residues: C-type lectin domain family 4 member M (376 aa).

The Cytoplasmic portion of the chain corresponds to 1–49; that stretch reads MSDSKEPRVQQLGLLEEDPTTSGIRLFPRDFQFQQIHGHKSSTGCLGHG. The short motif at 14–15 is the Endocytosis signal element; sequence LL. A helical; Signal-anchor for type II membrane protein membrane pass occupies residues 50–70; it reads ALVLQLLSFTLLAGVLVAILV. Over 71 to 376 the chain is Extracellular; that stretch reads QVSKVPSSLS…KKPTVCFRDE (306 aa). Asn-92 carries an N-linked (GlcNAc...) asparagine glycan. Tandem repeats lie at residues 108-130, 131-153, 154-176, 177-199, 200-222, and 223-245. The tract at residues 108–246 is 6 X approximate tandem repeats; that stretch reads KLQEIYQELT…AFERLCRHCP (139 aa). 4 disulfide bridges follow: Cys-242-Cys-372, Cys-245-Cys-256, Cys-273-Cys-366, and Cys-345-Cys-358. Positions 251–367 constitute a C-type lectin domain; the sequence is FFQGNCYFMS…CDVDNYWICK (117 aa). Residues Glu-336, Asn-338, Ser-340, Glu-343, Asn-354, and Asp-355 each contribute to the Ca(2+) site. The N-linked (GlcNAc...) asparagine glycan is linked to Asn-338.

Homotetramer.

It is found in the membrane. Functionally, probable pathogen-recognition receptor involved in peripheral immune surveillance in liver. May mediate the endocytosis of pathogens which are subsequently degraded in lysosomal compartments. Probably recognizes in a calcium-dependent manner high mannose N-linked oligosaccharides in a variety of pathogen antigens. Is a receptor for ICAM3, probably by binding to mannose-like carbohydrates. The sequence is that of C-type lectin domain family 4 member M (CLEC4M) from Gorilla gorilla gorilla (Western lowland gorilla).